The primary structure comprises 176 residues: ATP-dependent protease subunit HslV (176 aa).

T6 is an active-site residue. 3 residues coordinate Na(+): S161, C164, and T167.

This sequence belongs to the peptidase T1B family. HslV subfamily. In terms of assembly, a double ring-shaped homohexamer of HslV is capped on each side by a ring-shaped HslU homohexamer. The assembly of the HslU/HslV complex is dependent on binding of ATP.

It is found in the cytoplasm. It catalyses the reaction ATP-dependent cleavage of peptide bonds with broad specificity.. With respect to regulation, allosterically activated by HslU binding. In terms of biological role, protease subunit of a proteasome-like degradation complex believed to be a general protein degrading machinery. This is ATP-dependent protease subunit HslV from Aquifex aeolicus (strain VF5).